We begin with the raw amino-acid sequence, 157 residues long: Ciliary microtubule inner protein 5 (157 aa).

Disordered stretches follow at residues 1–57 (MGSR…SALG) and 92–124 (DPMG…AVGS). A compositionally biased stretch (basic and acidic residues) spans 92–109 (DPMGNKKEPVKLPDHVPR).

It localises to the cell projection. The protein resides in the cilium. This Bos taurus (Bovine) protein is Ciliary microtubule inner protein 5 (CIMIP5).